Reading from the N-terminus, the 321-residue chain is Phosphate-import protein PhnD (321 aa).

The signal sequence occupies residues 1–22 (MKIRAHHKIATAAACVALLASA). Residue Cys-23 is the site of N-palmitoyl cysteine attachment. Residue Cys-23 is the site of S-diacylglycerol cysteine attachment.

This sequence belongs to the phosphate/phosphite/phosphonate binding protein family. In terms of assembly, the complex is composed of two ATP-binding proteins (PhnC), two transmembrane proteins (PhnE) and a solute-binding protein (PhnD).

The protein localises to the cell membrane. Its function is as follows. Part of the ABC transporter complex PhnCDE involved in phosphate import. Responsible for phosphate binding. In Mycolicibacterium smegmatis (strain ATCC 700084 / mc(2)155) (Mycobacterium smegmatis), this protein is Phosphate-import protein PhnD (phnD).